A 511-amino-acid chain; its full sequence is Zinc finger and BTB domain-containing protein 45 (511 aa).

One can recognise a BTB domain in the interval 33–96 (CDVTVRIREA…LYSGSLVVAQ (64 aa)). Over residues 159–168 (ARPPGHPGAA) the composition is skewed to low complexity. Disordered regions lie at residues 159–241 (ARPP…PDCA) and 294–403 (EDGA…PPTY). A compositionally biased stretch (acidic residues) spans 206–224 (RGDEDDEESDDETDGEDGE). The segment covering 339-360 (PGPPAPPPSAPSGPAPAPPPAF) has biased composition (pro residues). A compositionally biased stretch (low complexity) spans 378 to 397 (PAPSAAPTTAPSGTPARTPG). 4 C2H2-type zinc fingers span residues 403–425 (YECS…MFIH), 431–453 (HQCA…MVTH), 459–481 (FQCA…MRTH), and 486–508 (APCP…LAAH).

The protein belongs to the krueppel C2H2-type zinc-finger protein family.

Its subcellular location is the nucleus. In terms of biological role, may be involved in transcriptional regulation. In the central nervous system, may play a role in glial cell differentiation. The polypeptide is Zinc finger and BTB domain-containing protein 45 (ZBTB45) (Homo sapiens (Human)).